We begin with the raw amino-acid sequence, 33 residues long: Brevinin-2DYa (33 aa).

A disulfide bridge connects residues Cys27 and Cys33.

In terms of tissue distribution, expressed by the skin glands.

Its subcellular location is the secreted. Its function is as follows. Antimicrobial peptide. This chain is Brevinin-2DYa, found in Rana dybowskii (Dybovsky's frog).